We begin with the raw amino-acid sequence, 617 residues long: 1-deoxy-D-xylulose-5-phosphate synthase (617 aa).

Thiamine diphosphate contacts are provided by residues His77 and Gly118 to Ser120. Position 149 (Asp149) interacts with Mg(2+). Thiamine diphosphate is bound by residues Gly150–Ala151, Asn178, Tyr286, and Glu367. Asn178 is a Mg(2+) binding site.

This sequence belongs to the transketolase family. DXPS subfamily. Homodimer. Requires Mg(2+) as cofactor. It depends on thiamine diphosphate as a cofactor.

It carries out the reaction D-glyceraldehyde 3-phosphate + pyruvate + H(+) = 1-deoxy-D-xylulose 5-phosphate + CO2. It functions in the pathway metabolic intermediate biosynthesis; 1-deoxy-D-xylulose 5-phosphate biosynthesis; 1-deoxy-D-xylulose 5-phosphate from D-glyceraldehyde 3-phosphate and pyruvate: step 1/1. In terms of biological role, catalyzes the acyloin condensation reaction between C atoms 2 and 3 of pyruvate and glyceraldehyde 3-phosphate to yield 1-deoxy-D-xylulose-5-phosphate (DXP). This Actinobacillus pleuropneumoniae serotype 5b (strain L20) protein is 1-deoxy-D-xylulose-5-phosphate synthase.